Reading from the N-terminus, the 75-residue chain is Lipid-anchored plasma membrane protein CPP2 (75 aa).

The interval 1–43 is disordered; it reads MSQQQGYYQQGPPQQGYYQQGPPQQGYYQQGPPQQGYPQQQPV. Repeat copies occupy residues 4-13, 14-23, and 24-33. Residues 4–33 are 3 X 10 AA tandem repeats of Q-Q-G-Y-Y-Q-Q-G-P-P; that stretch reads QQGYYQQGPPQQGYYQQGPPQQGYYQQGPP.

This sequence belongs to the CYSTM1 family. Palmitoylated near the C-terminus.

It is found in the cell membrane. The polypeptide is Lipid-anchored plasma membrane protein CPP2 (Saccharomyces cerevisiae (strain ATCC 204508 / S288c) (Baker's yeast)).